The sequence spans 270 residues: Type III pantothenate kinase (270 aa).

11 to 18 (DAGNSRIK) contributes to the ATP binding site. Substrate contacts are provided by residues Tyr-96 and 103-106 (GSDR). Asp-105 (proton acceptor) is an active-site residue. Thr-129 is an ATP binding site. Residue Thr-195 participates in substrate binding.

This sequence belongs to the type III pantothenate kinase family. As to quaternary structure, homodimer. NH4(+) is required as a cofactor. It depends on K(+) as a cofactor.

Its subcellular location is the cytoplasm. It catalyses the reaction (R)-pantothenate + ATP = (R)-4'-phosphopantothenate + ADP + H(+). It participates in cofactor biosynthesis; coenzyme A biosynthesis; CoA from (R)-pantothenate: step 1/5. Functionally, catalyzes the phosphorylation of pantothenate (Pan), the first step in CoA biosynthesis. The sequence is that of Type III pantothenate kinase from Paraburkholderia phytofirmans (strain DSM 17436 / LMG 22146 / PsJN) (Burkholderia phytofirmans).